Consider the following 400-residue polypeptide: Argininosuccinate synthase (400 aa).

An ATP-binding site is contributed by 8–16 (AYSGGLDTS). Positions 87 and 92 each coordinate L-citrulline. An ATP-binding site is contributed by Gly117. Positions 119, 123, and 124 each coordinate L-aspartate. Residue Asn123 participates in L-citrulline binding. L-citrulline contacts are provided by Arg127, Ser175, Glu259, and Tyr271.

This sequence belongs to the argininosuccinate synthase family. Type 1 subfamily. In terms of assembly, homotetramer.

Its subcellular location is the cytoplasm. The catalysed reaction is L-citrulline + L-aspartate + ATP = 2-(N(omega)-L-arginino)succinate + AMP + diphosphate + H(+). Its pathway is amino-acid biosynthesis; L-arginine biosynthesis; L-arginine from L-ornithine and carbamoyl phosphate: step 2/3. In Frankia alni (strain DSM 45986 / CECT 9034 / ACN14a), this protein is Argininosuccinate synthase.